Reading from the N-terminus, the 401-residue chain is Argininosuccinate synthase (401 aa).

9–17 serves as a coordination point for ATP; sequence AYSGGLDTS. Tyr-88 lines the L-citrulline pocket. Gly-118 contributes to the ATP binding site. L-aspartate is bound by residues Thr-120, Asn-124, and Asp-125. Residue Asn-124 coordinates L-citrulline. 5 residues coordinate L-citrulline: Arg-128, Ser-177, Ser-186, Glu-262, and Tyr-274.

Belongs to the argininosuccinate synthase family. Type 1 subfamily. Homotetramer.

It is found in the cytoplasm. It catalyses the reaction L-citrulline + L-aspartate + ATP = 2-(N(omega)-L-arginino)succinate + AMP + diphosphate + H(+). Its pathway is amino-acid biosynthesis; L-arginine biosynthesis; L-arginine from L-ornithine and carbamoyl phosphate: step 2/3. The protein is Argininosuccinate synthase of Chlorobaculum parvum (strain DSM 263 / NCIMB 8327) (Chlorobium vibrioforme subsp. thiosulfatophilum).